A 253-amino-acid chain; its full sequence is TasA anchoring/assembly protein (253 aa).

The signal sequence occupies residues 1–32 (MFRLFHNQQKAKTKLKVLLIFQLSVIFSLTAA). Residues 50 to 57 (TFDVSLQT) are important for TasA fiber formation. Residues 190–241 (EKPTVPKKETKSDVKKENETTQKDIPEKTMKEETSQEAVTKEKETQSDQKES) show a composition bias toward basic and acidic residues. Residues 190 to 253 (EKPTVPKKET…EDEKSNEADQ (64 aa)) are disordered.

It is found in the secreted. Its subcellular location is the cell wall. Required for biofilm formation. Required for the proper anchoring and polymerization of TasA amyloid fibers at the cell surface. Is also a minor component of TasA fibers. The sequence is that of TasA anchoring/assembly protein from Bacillus subtilis (strain 168).